The chain runs to 1694 residues: Homeobox-DDT domain protein RLT2 (1694 aa).

The interval 1-24 (MEGGSEKTTPEGCGGESKSKRKMK) is disordered. Positions 17–76 (SKSKRKMKTAAQLEVLENTYSAEPYPSEAIRADLSVKLNLSDRQLQMWFCHRRLKERKST) form a DNA-binding region, homeobox. The DDT domain occupies 514 to 573 (DENVANLLMVWRFLITFADVLGLWPFTLDEFAQAFHDYDPRLMGEIHIVLLKTIIKDIEG). The HTH HARE-type domain maps to 696 to 765 (GTVKFAAFHV…APSTYCVRAS (70 aa)). Over residues 795–816 (EDVDDAERDEDSESDVGEDPEV) the composition is skewed to acidic residues. Disordered stretches follow at residues 795–822 (EDVD…NLKK), 1450–1541 (KQEE…ICNE), 1555–1639 (AKTS…MNMK), and 1655–1674 (EDSY…AATR). 2 positions are modified to phosphoserine: serine 806 and serine 808. Positions 1459 to 1470 (GLGGVSSSGRGG) are enriched in gly residues. Basic residues-rich tracts occupy residues 1471-1485 (RPPR…RGNG) and 1515-1531 (GGRK…RKRP). 3 stretches are compositionally biased toward acidic residues: residues 1561 to 1578 (DNDD…DDGE), 1589 to 1605 (EDYD…DFDG), and 1624 to 1635 (DEYEEEEEEEED).

As to quaternary structure, interacts with CHR11. Interacts (via the DDT domain) with CHR11 (via C-terminus). As to expression, highly expressed in growing tissues such as inflorescence and flower meristems, young leaves and floral organs. Expressed in roots, rosette and cauline leaves, stems, flowers, inflorescences and siliques.

It localises to the nucleus. Functionally, transcriptional regulator required for the maintenance of the plant vegetative phase. In association with CHR11 or CHR17 may prevent the early activation of the vegetative-to-reproductive transition by regulating key genes that contribute to flower timing, such as FT, SEP1, SEP3, AGL8/FUL, SOC1 and FLC. Involved in the transcriptional regulation of seed-specific gene expression. The chain is Homeobox-DDT domain protein RLT2 from Arabidopsis thaliana (Mouse-ear cress).